The sequence spans 193 residues: Adenine phosphoribosyltransferase (193 aa).

The protein belongs to the purine/pyrimidine phosphoribosyltransferase family. As to quaternary structure, homodimer.

It is found in the cytoplasm. The enzyme catalyses AMP + diphosphate = 5-phospho-alpha-D-ribose 1-diphosphate + adenine. The protein operates within purine metabolism; AMP biosynthesis via salvage pathway; AMP from adenine: step 1/1. Catalyzes a salvage reaction resulting in the formation of AMP, that is energically less costly than de novo synthesis. The chain is Adenine phosphoribosyltransferase from Bifidobacterium animalis subsp. lactis (strain AD011).